Consider the following 120-residue polypeptide: Ribonuclease P protein component (120 aa).

Belongs to the RnpA family. As to quaternary structure, consists of a catalytic RNA component (M1 or rnpB) and a protein subunit.

The enzyme catalyses Endonucleolytic cleavage of RNA, removing 5'-extranucleotides from tRNA precursor.. Its function is as follows. RNaseP catalyzes the removal of the 5'-leader sequence from pre-tRNA to produce the mature 5'-terminus. It can also cleave other RNA substrates such as 4.5S RNA. The protein component plays an auxiliary but essential role in vivo by binding to the 5'-leader sequence and broadening the substrate specificity of the ribozyme. This is Ribonuclease P protein component from Dictyoglomus thermophilum (strain ATCC 35947 / DSM 3960 / H-6-12).